The following is a 63-amino-acid chain: Large ribosomal subunit protein bL28 (63 aa).

This sequence belongs to the bacterial ribosomal protein bL28 family.

The protein is Large ribosomal subunit protein bL28 of Hydrogenobaculum sp. (strain Y04AAS1).